The primary structure comprises 321 residues: Methenyltetrahydromethanopterin cyclohydrolase (321 aa).

It belongs to the MCH family.

It is found in the cytoplasm. The enzyme catalyses 5,10-methenyl-5,6,7,8-tetrahydromethanopterin + H2O = N(5)-formyl-5,6,7,8-tetrahydromethanopterin + H(+). It functions in the pathway one-carbon metabolism; methanogenesis from CO(2); 5,10-methenyl-5,6,7,8-tetrahydromethanopterin from CO(2): step 3/3. In terms of biological role, catalyzes the reversible interconversion of 5-formyl-H(4)MPT to methenyl-H(4)MPT(+). This Methanosarcina mazei (strain ATCC BAA-159 / DSM 3647 / Goe1 / Go1 / JCM 11833 / OCM 88) (Methanosarcina frisia) protein is Methenyltetrahydromethanopterin cyclohydrolase.